We begin with the raw amino-acid sequence, 315 residues long: Ribosomal RNA small subunit methyltransferase H (315 aa).

A disordered region spans residues 1-21 (MNVVNVVPMHLPPPPPRPRGE). S-adenosyl-L-methionine contacts are provided by residues 51 to 53 (GGH), aspartate 69, phenylalanine 96, aspartate 117, and glutamine 124. The interval 281-315 (KKPVTAGDDEVEGNPRARSAKLRAARRVGGAEALA) is disordered.

This sequence belongs to the methyltransferase superfamily. RsmH family.

It localises to the cytoplasm. The enzyme catalyses cytidine(1402) in 16S rRNA + S-adenosyl-L-methionine = N(4)-methylcytidine(1402) in 16S rRNA + S-adenosyl-L-homocysteine + H(+). Specifically methylates the N4 position of cytidine in position 1402 (C1402) of 16S rRNA. The polypeptide is Ribosomal RNA small subunit methyltransferase H (Sorangium cellulosum (strain So ce56) (Polyangium cellulosum (strain So ce56))).